The primary structure comprises 510 residues: NAD(P)H-quinone oxidoreductase subunit 2 B, chloroplastic (510 aa).

13 consecutive transmembrane segments (helical) span residues 24 to 44 (LLLF…GLIL), 57 to 77 (IPWL…ALLF), 99 to 119 (IFQF…VEYI), 124 to 144 (MAIT…MFLC), 149 to 169 (LITI…LSGY), 183 to 203 (YLLM…WLYG), 227 to 247 (PGIS…LSPA), 295 to 315 (WHLL…LIAI), 323 to 343 (MLAY…IVGD), 354 to 374 (YMLF…LFGL), 395 to 415 (ALSL…AGFF), 418 to 438 (LYLF…IGLL), and 484 to 504 (MIVC…IIAI).

The protein belongs to the complex I subunit 2 family. NDH is composed of at least 16 different subunits, 5 of which are encoded in the nucleus.

The protein localises to the plastid. The protein resides in the chloroplast thylakoid membrane. The enzyme catalyses a plastoquinone + NADH + (n+1) H(+)(in) = a plastoquinol + NAD(+) + n H(+)(out). The catalysed reaction is a plastoquinone + NADPH + (n+1) H(+)(in) = a plastoquinol + NADP(+) + n H(+)(out). In terms of biological role, NDH shuttles electrons from NAD(P)H:plastoquinone, via FMN and iron-sulfur (Fe-S) centers, to quinones in the photosynthetic chain and possibly in a chloroplast respiratory chain. The immediate electron acceptor for the enzyme in this species is believed to be plastoquinone. Couples the redox reaction to proton translocation, and thus conserves the redox energy in a proton gradient. The chain is NAD(P)H-quinone oxidoreductase subunit 2 B, chloroplastic from Daucus carota (Wild carrot).